A 509-amino-acid polypeptide reads, in one-letter code: Metal transporter Nramp3 (509 aa).

Over residues Met1–Ile12 the composition is skewed to low complexity. Positions Met1–Thr25 are disordered. A compositionally biased stretch (acidic residues) spans Asn13–Asp23. Helical transmembrane passes span Leu56–Leu76, Ala84–Val104, Met133–Gly153, Ile165–Leu185, Leu193–Gly213, Ala239–Val259, Ile285–Phe305, Tyr327–Gln347, Ile383–Leu403, Trp406–Val426, Ile444–Phe464, and Val472–Ile492.

The protein belongs to the NRAMP (TC 2.A.55) family. Expressed in vascular tissues.

The protein resides in the vacuole membrane. Its function is as follows. Vacuolar metal transporter involved in intracellular metal homeostasis. Can transport iron (Fe), manganese (Mn) and cadmium (Cd). Regulates metal accumulation under Fe starvation. Acts redundantly with NRAMP4 to mobilize vacuolar Fe and provide sufficient Fe during seed germination. In association with NRAMP4, required for optimal growth and photosynthesis under Mn deficiency. Exports Mn from vacuoles in leaf mesophyll cells, making Mn available for functional photosystem II in chloroplasts. Involved in basal resistance to the bacterial pathogen E.chrysanthemi. This Arabidopsis thaliana (Mouse-ear cress) protein is Metal transporter Nramp3 (NRAMP3).